Consider the following 370-residue polypeptide: DNA replication and repair protein RecF (370 aa).

Gly30 to Thr37 is an ATP binding site.

The protein belongs to the RecF family.

The protein localises to the cytoplasm. The RecF protein is involved in DNA metabolism; it is required for DNA replication and normal SOS inducibility. RecF binds preferentially to single-stranded, linear DNA. It also seems to bind ATP. In Bacillus velezensis (strain DSM 23117 / BGSC 10A6 / LMG 26770 / FZB42) (Bacillus amyloliquefaciens subsp. plantarum), this protein is DNA replication and repair protein RecF.